Here is a 202-residue protein sequence, read N- to C-terminus: Adenylate kinase (202 aa).

Residue Gly12–Thr20 coordinates ATP.

This sequence belongs to the archaeal adenylate kinase family.

Its subcellular location is the cytoplasm. It catalyses the reaction AMP + ATP = 2 ADP. In Aeropyrum pernix (strain ATCC 700893 / DSM 11879 / JCM 9820 / NBRC 100138 / K1), this protein is Adenylate kinase (adkA).